The following is a 150-amino-acid chain: 3-hydroxyacyl-[acyl-carrier-protein] dehydratase FabZ (150 aa).

Residue H54 is part of the active site.

It belongs to the thioester dehydratase family. FabZ subfamily.

It is found in the cytoplasm. The catalysed reaction is a (3R)-hydroxyacyl-[ACP] = a (2E)-enoyl-[ACP] + H2O. In terms of biological role, involved in unsaturated fatty acids biosynthesis. Catalyzes the dehydration of short chain beta-hydroxyacyl-ACPs and long chain saturated and unsaturated beta-hydroxyacyl-ACPs. This Pseudoalteromonas translucida (strain TAC 125) protein is 3-hydroxyacyl-[acyl-carrier-protein] dehydratase FabZ.